The chain runs to 267 residues: MEVKIKQVDEVKISRYIIKETMEDWYQFVESDVVIVGAGPSGLSAAYYLAKAGLKTLVFERRLSFGGGIGGGAMLFHKLIIEKPADEILREVNVRLKEVEEGVYVVDSAEFMAKLATAAIDAGAKIIHGVTVDDVIFRENPLRVAGVAVEWTATQMASLHVDPIFISAKAVVDATGHDAEVISVAARKIPELGIVIAGEKSAYSERAEELTVINTGKVAEGLYAAGMAVTEVKGLPRMGPIFGAMVLSGKAVAEEITKDLLKSEIRT.

NAD(+) is bound by residues S41, 60–61 (ER), G68, V132, and 160–162 (HVD). Fe cation is bound by residues D162 and H177. M227 lines the NAD(+) pocket. R237 serves as a coordination point for glycine.

The protein belongs to the THI4 family. In terms of assembly, homooctamer; tetramer of dimers. Fe(2+) serves as cofactor.

It carries out the reaction hydrogen sulfide + glycine + NAD(+) = ADP-5-ethyl-4-methylthiazole-2-carboxylate + nicotinamide + 3 H2O + H(+). It functions in the pathway cofactor biosynthesis; thiamine diphosphate biosynthesis. Functionally, involved in the biosynthesis of the thiazole moiety of thiamine. Catalyzes the conversion of NAD and glycine to adenosine diphosphate 5-(2-hydroxyethyl)-4-methylthiazole-2-carboxylate (ADT), an adenylated thiazole intermediate, using free sulfide as a source of sulfur. The chain is Thiamine thiazole synthase from Saccharolobus islandicus (strain Y.N.15.51 / Yellowstone #2) (Sulfolobus islandicus).